Reading from the N-terminus, the 152-residue chain is UPF0266 membrane protein KPK_1957 (152 aa).

3 helical membrane passes run 6 to 26, 45 to 65, and 67 to 87; these read LVII…QFIM, VDGL…ITQH, and TPIT…LFWI.

The protein belongs to the UPF0266 family.

It localises to the cell inner membrane. This Klebsiella pneumoniae (strain 342) protein is UPF0266 membrane protein KPK_1957.